Reading from the N-terminus, the 722-residue chain is Polyribonucleotide nucleotidyltransferase (722 aa).

Mg(2+) contacts are provided by aspartate 487 and aspartate 493. Positions 554–613 (PRIETFKIPTDKIREVIGTGGKVIREIVEKTGAKVNIEDDGTVKVASSDGESIKAAIKWI) constitute a KH domain. In terms of domain architecture, S1 motif spans 623-691 (GEIYEGTVVK…DRGKTRLSMK (69 aa)). Residues 691 to 722 (KVVDQDTGEDLEAKQKAEAKAEDEAPAQAAGE) are disordered. The segment covering 701-713 (LEAKQKAEAKAED) has biased composition (basic and acidic residues).

The protein belongs to the polyribonucleotide nucleotidyltransferase family. It depends on Mg(2+) as a cofactor.

The protein localises to the cytoplasm. The catalysed reaction is RNA(n+1) + phosphate = RNA(n) + a ribonucleoside 5'-diphosphate. Involved in mRNA degradation. Catalyzes the phosphorolysis of single-stranded polyribonucleotides processively in the 3'- to 5'-direction. The sequence is that of Polyribonucleotide nucleotidyltransferase from Rhodopseudomonas palustris (strain BisB5).